The primary structure comprises 342 residues: Ribosomal RNA small subunit methyltransferase H (342 aa).

Residues 43–45, Asp-61, Phe-87, Asp-108, and Gln-115 each bind S-adenosyl-L-methionine; that span reads GGY. The interval 322–342 is disordered; the sequence is ALDEASDGMNLPPLAELEKSR.

Belongs to the methyltransferase superfamily. RsmH family.

The protein localises to the cytoplasm. It catalyses the reaction cytidine(1402) in 16S rRNA + S-adenosyl-L-methionine = N(4)-methylcytidine(1402) in 16S rRNA + S-adenosyl-L-homocysteine + H(+). Specifically methylates the N4 position of cytidine in position 1402 (C1402) of 16S rRNA. The polypeptide is Ribosomal RNA small subunit methyltransferase H (Hyphomonas neptunium (strain ATCC 15444)).